Here is a 698-residue protein sequence, read N- to C-terminus: Iron-sulfur clusters transporter ATM1, mitochondrial (698 aa).

The transit peptide at 1-23 (MIPQLLQRSSRACPRYNPALYRL) directs the protein to the mitochondrion. The Mitochondrial matrix segment spans residues 24–113 (STTSQQRPGL…PKDDWGTKLR (90 aa)). The tract at residues 32–63 (GLTQTFWTSAPRREQPRTPTDSKPTTTKPSAV) is disordered. Over residues 48-61 (RTPTDSKPTTTKPS) the composition is skewed to low complexity. A helical membrane pass occupies residues 114 to 135 (VSLAVSLLIGAKVLNVQVPFYF). Residues 114 to 404 (VSLAVSLLIG…LGSVYRELRQ (291 aa)) form the ABC transmembrane type-1 domain. Residues 136–158 (KSIVDSMNIDVAAVGGTATTVAG) lie on the Mitochondrial intermembrane side of the membrane. Residues 159-182 (AMILAYGASRIGATVFQELRNAVF) form a helical membrane-spanning segment. Residues 183–231 (ASVAQNAIRKVACNVFDHLLRLDLTFHLSKQTGGLTRALDRGTKGISFI) lie on the Mitochondrial matrix side of the membrane. Residues 232–255 (LSSMVFHVLPTALEISMVCGILTY) form a helical membrane-spanning segment. A topological domain (mitochondrial intermembrane) is located at residue N256. A helical membrane pass occupies residues 257 to 277 (YGAKFAALTVLTMVSYTAFTI). Residues 278 to 343 (WTTAWRTKFR…NSIKVATSLA (66 aa)) are Mitochondrial matrix-facing. Glutathione-binding positions include 283-287 (RTKFR) and 346-349 (NSGQ). The helical transmembrane segment at 344–362 (LLNSGQNIIFSSALTGMMY) threads the bilayer. Residues 363–377 (LAANGVAEGTLTVGD) are Mitochondrial intermembrane-facing. A helical transmembrane segment spans residues 378–399 (LVMVNQLVFQLSVPLNFLGSVY). Position 396 (G396) interacts with glutathione. Topologically, residues 400–698 (RELRQSLLDM…EEENDEQKKN (299 aa)) are mitochondrial matrix. An ABC transporter domain is found at 439–675 (IKFENVNFAY…DGVYAELWSA (237 aa)). Residues Y448 and 472-483 (GPSGCGKSTLLR) contribute to the ATP site. The interval 679–698 (MFGEDGKEKSEEENDEQKKN) is disordered. Over residues 682 to 698 (EDGKEKSEEENDEQKKN) the composition is skewed to basic and acidic residues.

The protein belongs to the ABC transporter superfamily. ABCB family. Heavy Metal importer (TC 3.A.1.210) subfamily. Homodimer.

The protein localises to the mitochondrion inner membrane. Functionally, performs an essential function in the generation of cytoplasmic iron-sulfur proteins by mediating the ATP-dependent export of Fe/S cluster precursors synthesized by NFS1 and other mitochondrial proteins. Hydrolyzes ATP. Binds glutathione and may function by transporting a glutathione-conjugated iron-sulfur compound. The polypeptide is Iron-sulfur clusters transporter ATM1, mitochondrial (Gibberella zeae (strain ATCC MYA-4620 / CBS 123657 / FGSC 9075 / NRRL 31084 / PH-1) (Wheat head blight fungus)).